A 111-amino-acid chain; its full sequence is Large ribosomal subunit protein uL22 (111 aa).

It belongs to the universal ribosomal protein uL22 family. As to quaternary structure, part of the 50S ribosomal subunit.

In terms of biological role, this protein binds specifically to 23S rRNA; its binding is stimulated by other ribosomal proteins, e.g. L4, L17, and L20. It is important during the early stages of 50S assembly. It makes multiple contacts with different domains of the 23S rRNA in the assembled 50S subunit and ribosome. Functionally, the globular domain of the protein is located near the polypeptide exit tunnel on the outside of the subunit, while an extended beta-hairpin is found that lines the wall of the exit tunnel in the center of the 70S ribosome. This chain is Large ribosomal subunit protein uL22, found in Chlamydia trachomatis serovar L2b (strain UCH-1/proctitis).